Reading from the N-terminus, the 417-residue chain is Queuine tRNA-ribosyltransferase accessory subunit 2 (417 aa).

Residues Cys324, Cys326, Cys329, and His355 each coordinate Zn(2+).

The protein belongs to the queuine tRNA-ribosyltransferase family. QTRT2 subfamily. Heterodimer of a catalytic subunit and an accessory subunit. The cofactor is Zn(2+).

The protein localises to the cytoplasm. Functionally, non-catalytic subunit of the queuine tRNA-ribosyltransferase (TGT) that catalyzes the base-exchange of a guanine (G) residue with queuine (Q) at position 34 (anticodon wobble position) in tRNAs with GU(N) anticodons (tRNA-Asp, -Asn, -His and -Tyr), resulting in the hypermodified nucleoside queuosine (7-(((4,5-cis-dihydroxy-2-cyclopenten-1-yl)amino)methyl)-7-deazaguanosine). This Drosophila pseudoobscura pseudoobscura (Fruit fly) protein is Queuine tRNA-ribosyltransferase accessory subunit 2.